The sequence spans 449 residues: Tripartite motif-containing protein 64B (449 aa).

Residues 15-56 (CCICVNYFIDPVTIDCGHSFCRPCLCLCSEEGRAPMRCPSCR) form an RING-type zinc finger. The B box-type zinc finger occupies 87-128 (SSDNICVLHEETKELFCEADKRLLCGPCSESPEHMAHSHSPI). Zn(2+) is bound by residues Cys-92, His-95, Cys-114, and His-120. Residues 189–225 (LDEEEQRHLQALEREAEELFQQLQDSQVRMTQHLERM) adopt a coiled-coil conformation. The B30.2/SPRY domain maps to 268 to 449 (ELTSWCITGV…LRPFFCFGCT (182 aa)).

It belongs to the TRIM/RBCC family.

This Homo sapiens (Human) protein is Tripartite motif-containing protein 64B (TRIM64B).